The primary structure comprises 195 residues: Transcription repressor OFP17 (195 aa).

Positions Glu130–Asp190 constitute an OVATE domain.

The protein localises to the nucleus. Functionally, transcriptional repressor that may regulate multiple aspects of plant growth and development through the regulation of BEL1-LIKE (BLH) and KNOX TALE (KNAT) homeodomain transcription factors. This Arabidopsis thaliana (Mouse-ear cress) protein is Transcription repressor OFP17 (OFP17).